A 252-amino-acid chain; its full sequence is Methylthioribulose-1-phosphate dehydratase (252 aa).

Cysteine 105 lines the substrate pocket. Histidine 123 and histidine 125 together coordinate Zn(2+). Glutamate 151 functions as the Proton donor/acceptor in the catalytic mechanism. Histidine 208 contributes to the Zn(2+) binding site.

The protein belongs to the aldolase class II family. MtnB subfamily. The cofactor is Zn(2+).

It is found in the cytoplasm. The enzyme catalyses 5-(methylsulfanyl)-D-ribulose 1-phosphate = 5-methylsulfanyl-2,3-dioxopentyl phosphate + H2O. It participates in amino-acid biosynthesis; L-methionine biosynthesis via salvage pathway; L-methionine from S-methyl-5-thio-alpha-D-ribose 1-phosphate: step 2/6. Functionally, catalyzes the dehydration of methylthioribulose-1-phosphate (MTRu-1-P) into 2,3-diketo-5-methylthiopentyl-1-phosphate (DK-MTP-1-P). In Sclerotinia sclerotiorum (strain ATCC 18683 / 1980 / Ss-1) (White mold), this protein is Methylthioribulose-1-phosphate dehydratase.